The chain runs to 295 residues: HTH-type transcriptional regulator TfdS (295 aa).

The HTH lysR-type domain maps to 1 to 58 (MEFRQLRYFVAAAEEGNVGAAARRLHISQPPVTRQIHALEQHLGVLLFERSARGVQLT). A DNA-binding region (H-T-H motif) is located at residues 18-37 (VGAAARRLHISQPPVTRQIH).

The protein belongs to the LysR transcriptional regulatory family.

The protein resides in the cytoplasm. Functionally, involved in the regulation of 3-chlorocatechol degradation. Transcriptional regulator of tfdB expression. Acts as a repressor in the absence of its effector (either 2-cis-chlorodiene lactone or chloromaleylacetate) but acts as an activator when its effector is present. This chain is HTH-type transcriptional regulator TfdS (tfdS), found in Cupriavidus pinatubonensis (strain JMP 134 / LMG 1197) (Cupriavidus necator (strain JMP 134)).